Consider the following 150-residue polypeptide: Large ribosomal subunit protein uL22c (150 aa).

The protein belongs to the universal ribosomal protein uL22 family. Part of the 50S ribosomal subunit.

Its subcellular location is the plastid. Functionally, this protein binds specifically to 23S rRNA. Its function is as follows. The globular domain of the protein is located near the polypeptide exit tunnel on the outside of the subunit, while an extended beta-hairpin is found that lines the wall of the exit tunnel in the center of the 70S ribosome. The polypeptide is Large ribosomal subunit protein uL22c (rpl22) (Orobanche minor (Small broomrape)).